Here is a 266-residue protein sequence, read N- to C-terminus: Indole-3-glycerol phosphate synthase (266 aa).

This sequence belongs to the TrpC family.

The catalysed reaction is 1-(2-carboxyphenylamino)-1-deoxy-D-ribulose 5-phosphate + H(+) = (1S,2R)-1-C-(indol-3-yl)glycerol 3-phosphate + CO2 + H2O. It functions in the pathway amino-acid biosynthesis; L-tryptophan biosynthesis; L-tryptophan from chorismate: step 4/5. This chain is Indole-3-glycerol phosphate synthase, found in Opitutus terrae (strain DSM 11246 / JCM 15787 / PB90-1).